The following is a 591-amino-acid chain: Probable LRR receptor-like serine/threonine-protein kinase At1g69990 (591 aa).

The first 18 residues, 1 to 18 (MKTISIFFVIILMSSSHA), serve as a signal peptide directing secretion. Topologically, residues 19–218 (EDDVLCLKGF…GKNLTIIVTA (200 aa)) are extracellular. The N-linked (GlcNAc...) asparagine glycan is linked to Asn46. LRR repeat units follow at residues 66–88 (RILS…LKLC), 90–111 (SLQS…QICS), 115–137 (YLVT…IVDC), 139–162 (FLNS…TRLN), and 163–185 (RLQR…LSHY). Asn211 carries an N-linked (GlcNAc...) asparagine glycan. Residues 219-239 (GVIGAVGSLCVGFGMFWWFFI) form a helical membrane-spanning segment. Residues 240–591 (RDRRKMNNYG…LIFNKQEHLK (352 aa)) are Cytoplasmic-facing. Position 292 is a phosphothreonine (Thr292). The region spanning 295–573 (FDSGNIVVSS…KNLGDQHGFF (279 aa)) is the Protein kinase domain. Residues 301-309 (VVSSRSGVS) and Lys323 contribute to the ATP site. Ser378 is modified (phosphoserine). Thr389 carries the post-translational modification Phosphothreonine. A Phosphotyrosine modification is found at Tyr463. Ser465 bears the Phosphoserine mark. Thr466 is subject to Phosphothreonine. Phosphoserine is present on Ser470.

It belongs to the protein kinase superfamily. Ser/Thr protein kinase family.

The protein localises to the membrane. The enzyme catalyses L-seryl-[protein] + ATP = O-phospho-L-seryl-[protein] + ADP + H(+). It carries out the reaction L-threonyl-[protein] + ATP = O-phospho-L-threonyl-[protein] + ADP + H(+). The polypeptide is Probable LRR receptor-like serine/threonine-protein kinase At1g69990 (Arabidopsis thaliana (Mouse-ear cress)).